The chain runs to 359 residues: tRNA N6-adenosine threonylcarbamoyltransferase (359 aa).

Histidine 115 and histidine 119 together coordinate Fe cation. Residues 137-141, aspartate 170, glycine 183, and asparagine 283 contribute to the substrate site; that span reads LVSGG. Aspartate 311 serves as a coordination point for Fe cation. The segment at 328–359 is disordered; the sequence is APDSLDIAPRSRWPLDEKSAPVFGTGRRGAKA.

Belongs to the KAE1 / TsaD family. The cofactor is Fe(2+).

It is found in the cytoplasm. It catalyses the reaction L-threonylcarbamoyladenylate + adenosine(37) in tRNA = N(6)-L-threonylcarbamoyladenosine(37) in tRNA + AMP + H(+). Functionally, required for the formation of a threonylcarbamoyl group on adenosine at position 37 (t(6)A37) in tRNAs that read codons beginning with adenine. Is involved in the transfer of the threonylcarbamoyl moiety of threonylcarbamoyl-AMP (TC-AMP) to the N6 group of A37, together with TsaE and TsaB. TsaD likely plays a direct catalytic role in this reaction. This is tRNA N6-adenosine threonylcarbamoyltransferase from Brucella ovis (strain ATCC 25840 / 63/290 / NCTC 10512).